An 881-amino-acid polypeptide reads, in one-letter code: Low-affinity phosphate transporter PHO90 (881 aa).

The 288-residue stretch at 1-288 folds into the SPX domain; that stretch reads MRFSHFLKYN…HLNTRTELIE (288 aa). Helical transmembrane passes span 417-437, 456-476, 493-513, 514-534, 539-559, 581-601, 663-683, 691-711, 718-738, 758-778, 805-825, and 854-874; these read IYFI…NDAA, AIPL…FKVL, ILAA…TLGE, VLAQ…FAGC, VLLM…NVAA, AQAL…SSPI, FTVK…LWCV, FGSS…TGLL, AFPW…KAVS, GVFA…TFVS, ILVF…SSGF, and ASIL…ASVV.

The protein belongs to the CitM (TC 2.A.11) transporter family.

The protein resides in the membrane. In terms of biological role, low-affinity phosphate transporter involved in the control of cellular phosphate levels. This chain is Low-affinity phosphate transporter PHO90 (PHO90), found in Saccharomyces cerevisiae (strain ATCC 204508 / S288c) (Baker's yeast).